We begin with the raw amino-acid sequence, 206 residues long: Large ribosomal subunit protein mL62 (206 aa).

The transit peptide at 1 to 29 (MAAARCLRWGLSRAEAWLLPPPTSCCHRA) directs the protein to the mitochondrion. Gln-90 carries the N5-methylglutamine modification.

Belongs to the prokaryotic/mitochondrial release factor family. Mitochondrion-specific ribosomal protein mL62 subfamily. As to quaternary structure, component of the mitochondrial ribosome large subunit (39S) which comprises a 16S rRNA and about 50 distinct proteins. Post-translationally, methylation of glutamine in the GGQ triplet by HEMK1.

The protein localises to the mitochondrion. It catalyses the reaction an N-acyl-L-alpha-aminoacyl-tRNA + H2O = an N-acyl-L-amino acid + a tRNA + H(+). Its function is as follows. Essential peptidyl-tRNA hydrolase component of the mitochondrial large ribosomal subunit. Acts as a codon-independent translation release factor that has lost all stop codon specificity and directs the termination of translation in mitochondrion, possibly in case of abortive elongation. May be involved in the hydrolysis of peptidyl-tRNAs that have been prematurely terminated and thus in the recycling of stalled mitochondrial ribosomes. This is Large ribosomal subunit protein mL62 from Bos taurus (Bovine).